The sequence spans 195 residues: Probable peroxygenase 4 (195 aa).

The 36-residue stretch at 14-49 (EEDNFLQRHVAFFDRNKDGIVYPSETFQGFRAIGCG) folds into the EF-hand domain. His22 is a binding site for heme. Residues Asp27, Asn29, Asp31, and Glu38 each contribute to the Ca(2+) site. The short motif at 70–79 (PGKGFSIWFP) is the Proline-knot element. Ser177 carries the post-translational modification Phosphoserine.

It belongs to the caleosin family. As to quaternary structure, homodimer. Requires heme b as cofactor. It depends on Ca(2+) as a cofactor. As to expression, expressed in roots, leaves, stems, shoots, flowers and germinated seeds. Barely detected in dry seeds prior to germination. Preferentially expressed in vascular bundles and in guard cells.

Its subcellular location is the lipid droplet. It carries out the reaction RH + ROOH = ROH + ROH.. Its function is as follows. Calcium-binding peroxygenase involved in the degradation of storage lipid in oil bodies. May be involved in the interaction between oil bodies and vacuoles during seed germination. Acts as a negative regulator of abscisic acid responses in non-seed tissues. The sequence is that of Probable peroxygenase 4 (PXG4) from Arabidopsis thaliana (Mouse-ear cress).